Consider the following 996-residue polypeptide: Filament-like plant protein 5 (996 aa).

The disordered stretch occupies residues 1-20 (MEGRGWPWKRKSSDKATTEK). Coiled coils occupy residues 59-94 (THMS…TKES), 133-248 (TAED…KYDL), 280-301 (VKKI…RKKL), and 359-387 (LTRR…LQVS). Disordered regions lie at residues 409–482 (NNDK…SSSR) and 496–534 (VGSD…DEDT). The segment covering 417–428 (SNSRNLSESLSS) has biased composition (low complexity). Residues 471–482 (VNGSSKPRSSSR) show a composition bias toward polar residues. The segment covering 503 to 527 (ANSASKSSNSVCSRRSVEKQSSSKS) has biased composition (low complexity). Coiled coils occupy residues 601–622 (QNSE…VANI), 737–841 (DSSC…FTTE), and 876–906 (NQEK…QSLQ). Residues 962–996 (IMKSSSVSSSSKEDNEKHTRGLGRFFSSKSKNSAR) are disordered.

This sequence belongs to the FPP family. Interacts with WPP/MAF proteins.

The chain is Filament-like plant protein 5 (FPP5) from Arabidopsis thaliana (Mouse-ear cress).